The primary structure comprises 361 residues: POU domain, class 3, transcription factor 4-A (361 aa).

Disordered regions lie at residues 100–131, 150–189, and 333–361; these read HVNH…GQPI, LTPP…EETP, and EKRM…CNEL. The segment covering 119–131 has biased composition (polar residues); sequence AHNSSLTSSGQPI. Over residues 165 to 183 the composition is skewed to basic and acidic residues; the sequence is VLREPNDHVDLGSHHCQDH. Residues 186–260 enclose the POU-specific domain; that stretch reads EETPTSDELE…LLNKWLEEAD (75 aa). The segment at residues 278 to 337 is a DNA-binding region (homeobox); the sequence is KRKKRTSIEVSVKGVLETHFLKCPKPAALEITSLADSLQLEKEVVRVWFCNRRQKEKRMT.

It belongs to the POU transcription factor family. Class-3 subfamily. From embryonic stage 10, expressed in the Spemann's organizer. During gastrulation, expressed in both the involuting mesoderm and the overlying neuroectoderm. During the neural plate and neural fold stages, expressed in the entire neuroectoderm with expression in discrete regions of the developing nervous system persisting at later stages. Transiently expressed in the pronephros from stages 24-32. In adults, expressed in the kidney and brain.

It localises to the nucleus. In terms of biological role, transcriptional activator. Induces neural-specific gene expression to act as a key regulator of neural differentiation. The protein is POU domain, class 3, transcription factor 4-A (pou3f4-a) of Xenopus laevis (African clawed frog).